The chain runs to 170 residues: MLTRSKAGINKLNPKYSLTITTTIKKEPKSVIFALKDPGWCQAMQEELDALSRNKTWILVPPPVNQNILGCKWVFKTKLHSDGTLDRLKARLVAKGFHQEEGIYFVETYSPVVRTATIRTILNVAQQLEVGQSINWMFKMHFSMGIFKKKFICINLLVLRILFIHPMCVC.

It is found in the mitochondrion. This is an uncharacterized protein from Arabidopsis thaliana (Mouse-ear cress).